A 397-amino-acid chain; its full sequence is Phosphoribulokinase, chloroplastic (397 aa).

The transit peptide at 1–44 (MAVSAYTVPTTSHLGFNQKKQLFFCNKSAYKRVSFSSRPCVITC) directs the protein to the chloroplast. An intrachain disulfide couples C62 to C101.

The protein belongs to the phosphoribulokinase family.

Its subcellular location is the plastid. It localises to the chloroplast. The catalysed reaction is D-ribulose 5-phosphate + ATP = D-ribulose 1,5-bisphosphate + ADP + H(+). It functions in the pathway carbohydrate biosynthesis; Calvin cycle. Light regulated via thioredoxin by reversible oxidation/reduction of sulfhydryl/disulfide groups. In Mesembryanthemum crystallinum (Common ice plant), this protein is Phosphoribulokinase, chloroplastic.